A 397-amino-acid polypeptide reads, in one-letter code: Mediator of RNA polymerase II transcription subunit 3 (397 aa).

Met1 bears the N-acetylmethionine mark. Low complexity predominate over residues 147-165; the sequence is ASTPTTTATPHANPITHAH. Disordered regions lie at residues 147–227, 288–327, and 346–370; these read ASTP…AQAQ, SMGAQNQGGQVSMSQFNGSGNGSNPNTNTNSNNTPLQSQL, and FQQQQQQQQQQQQPQPQYNMNMGMN. 2 stretches are compositionally biased toward polar residues: residues 166-178 and 189-202; these read SLSNPNSTATMQH and SGSTMGTPTVHNST. Over residues 211–223 the composition is skewed to basic residues; it reads KKPRKPRQTKKAK. Over residues 290 to 303 the composition is skewed to polar residues; that stretch reads GAQNQGGQVSMSQF. Over residues 309–322 the composition is skewed to low complexity; that stretch reads GSNPNTNTNSNNTP.

It belongs to the mediator complex subunit 3 family. Component of the Mediator complex, which is composed of at least 21 subunits that form three structurally distinct submodules. The Mediator head module contains MED6, MED8, MED11, SRB4/MED17, SRB5/MED18, ROX3/MED19, SRB2/MED20 and SRB6/MED22, the middle module contains MED1, MED4, NUT1/MED5, MED7, CSE2/MED9, NUT2/MED10, SRB7/MED21 and SOH1/MED31, and the tail module contains MED2, PGD1/MED3, RGR1/MED14, GAL11/MED15 and SIN4/MED16. The head and the middle modules interact directly with RNA polymerase II, whereas the elongated tail module interacts with gene-specific regulatory proteins. PGD1/MED3 interacts directly with the CYC8-TUP1 corepressor proteins.

It is found in the nucleus. Component of the Mediator complex, a coactivator involved in the regulated transcription of nearly all RNA polymerase II-dependent genes. Mediator functions as a bridge to convey information from gene-specific regulatory proteins to the basal RNA polymerase II transcription machinery. The Mediator complex, having a compact conformation in its free form, is recruited to promoters by direct interactions with regulatory proteins and serves for the assembly of a functional preinitiation complex with RNA polymerase II and the general transcription factors. The Mediator complex unfolds to an extended conformation and partially surrounds RNA polymerase II, specifically interacting with the unphosphorylated form of the C-terminal domain (CTD) of RNA polymerase II. The Mediator complex dissociates from the RNA polymerase II holoenzyme and stays at the promoter when transcriptional elongation begins. PGD1/MED3 is also involved in direct repeat recombination. The protein is Mediator of RNA polymerase II transcription subunit 3 (PGD1) of Saccharomyces cerevisiae (strain ATCC 204508 / S288c) (Baker's yeast).